Consider the following 458-residue polypeptide: Argininosuccinate lyase (458 aa).

Belongs to the lyase 1 family. Argininosuccinate lyase subfamily.

The protein resides in the cytoplasm. It catalyses the reaction 2-(N(omega)-L-arginino)succinate = fumarate + L-arginine. Its pathway is amino-acid biosynthesis; L-arginine biosynthesis; L-arginine from L-ornithine and carbamoyl phosphate: step 3/3. This is Argininosuccinate lyase from Neisseria meningitidis serogroup C / serotype 2a (strain ATCC 700532 / DSM 15464 / FAM18).